The chain runs to 277 residues: WRKY transcription factor 68 (277 aa).

The tract at residues 51 to 96 is disordered; that stretch reads TPLMHFPTTPNSSSSEAVNGDDEEEEDGEEQQHKTKKRFKFTKMSR. A compositionally biased stretch (polar residues) spans 58–67; it reads TTPNSSSSEA. Acidic residues predominate over residues 69-79; it reads NGDDEEEEDGE. Positions 84–96 are enriched in basic residues; sequence KTKKRFKFTKMSR. The WRKY DNA-binding region spans 112–177; that stretch reads SEVLHLDDGY…YEGQHTHPRP (66 aa). The interval 183 to 206 is disordered; the sequence is KEGSSPSNGSASRAHIGLPTLPPQ.

Belongs to the WRKY group II-c family.

The protein localises to the nucleus. Functionally, transcription factor. Interacts specifically with the W box (5'-(T)TGAC[CT]-3'), a frequently occurring elicitor-responsive cis-acting element. This Arabidopsis thaliana (Mouse-ear cress) protein is WRKY transcription factor 68 (WRKY68).